The primary structure comprises 120 residues: uncharacterized protein (120 aa).

The next 4 helical transmembrane spans lie at Trp9–Gly29, Ala32–Leu52, Phe68–Thr88, and Gly94–Phe114.

It localises to the membrane. This is an uncharacterized protein from Escherichia phage Mu (Bacteriophage Mu).